A 159-amino-acid polypeptide reads, in one-letter code: Endoribonuclease YbeY (159 aa).

Zn(2+)-binding residues include H122, H126, and H132.

It belongs to the endoribonuclease YbeY family. The cofactor is Zn(2+).

It is found in the cytoplasm. Functionally, single strand-specific metallo-endoribonuclease involved in late-stage 70S ribosome quality control and in maturation of the 3' terminus of the 16S rRNA. This chain is Endoribonuclease YbeY, found in Roseiflexus castenholzii (strain DSM 13941 / HLO8).